We begin with the raw amino-acid sequence, 486 residues long: Glutamyl-tRNA(Gln) amidotransferase subunit A (486 aa).

Active-site charge relay system residues include lysine 79 and serine 154. Serine 178 acts as the Acyl-ester intermediate in catalysis.

Belongs to the amidase family. GatA subfamily. As to quaternary structure, heterotrimer of A, B and C subunits.

The enzyme catalyses L-glutamyl-tRNA(Gln) + L-glutamine + ATP + H2O = L-glutaminyl-tRNA(Gln) + L-glutamate + ADP + phosphate + H(+). In terms of biological role, allows the formation of correctly charged Gln-tRNA(Gln) through the transamidation of misacylated Glu-tRNA(Gln) in organisms which lack glutaminyl-tRNA synthetase. The reaction takes place in the presence of glutamine and ATP through an activated gamma-phospho-Glu-tRNA(Gln). This Dehalococcoides mccartyi (strain CBDB1) protein is Glutamyl-tRNA(Gln) amidotransferase subunit A.